The primary structure comprises 368 residues: Peptide chain release factor 2 (368 aa).

An N5-methylglutamine modification is found at Gln250.

It belongs to the prokaryotic/mitochondrial release factor family. Post-translationally, methylated by PrmC. Methylation increases the termination efficiency of RF2.

It is found in the cytoplasm. Its function is as follows. Peptide chain release factor 2 directs the termination of translation in response to the peptide chain termination codons UGA and UAA. The protein is Peptide chain release factor 2 of Rickettsia africae (strain ESF-5).